Reading from the N-terminus, the 224-residue chain is MSPAFNASPDQLTLALSKGRIFKETLPLLAAAGIQVTEDPETSRKLILPTSDPAVRVIIVRASDVPTYVQYGAADFGVAGKDVLMEHGMAGLYAPIDLNIARCRMSVAVPAGFDYVNAVRQGARLAVATKYVQTAREHFAKKGVHVDLIKLYGSMELGPLVGLSDAIVDLVSTGSTLRANNLVEVEEIVQISSRLVVNQAALKLKRERLAPILDAFERASAALA.

This sequence belongs to the ATP phosphoribosyltransferase family. Short subfamily. Heteromultimer composed of HisG and HisZ subunits.

It is found in the cytoplasm. The catalysed reaction is 1-(5-phospho-beta-D-ribosyl)-ATP + diphosphate = 5-phospho-alpha-D-ribose 1-diphosphate + ATP. It functions in the pathway amino-acid biosynthesis; L-histidine biosynthesis; L-histidine from 5-phospho-alpha-D-ribose 1-diphosphate: step 1/9. Its function is as follows. Catalyzes the condensation of ATP and 5-phosphoribose 1-diphosphate to form N'-(5'-phosphoribosyl)-ATP (PR-ATP). Has a crucial role in the pathway because the rate of histidine biosynthesis seems to be controlled primarily by regulation of HisG enzymatic activity. This chain is ATP phosphoribosyltransferase, found in Cupriavidus metallidurans (strain ATCC 43123 / DSM 2839 / NBRC 102507 / CH34) (Ralstonia metallidurans).